The chain runs to 805 residues: Zinc finger CCCH domain-containing protein 11B (805 aa).

C3H1-type zinc fingers lie at residues 2-29 (PNQG…HCEA) and 31-57 (LGNE…HMEI). Disordered stretches follow at residues 140–194 (KVES…GLRV), 223–351 (KKMK…DKVN), 364–433 (MLLE…TCIK), 449–468 (IVAS…SMQE), 481–506 (KALR…PGAR), and 715–805 (VTVP…PLEL). Positions 160-175 (ADDDEDDDDQFSEEGD) are enriched in acidic residues. Basic and acidic residues predominate over residues 364-390 (MLLERASQKHGESQTKLKTEGPSKTDD). A compositionally biased stretch (polar residues) spans 391–402 (STSGARSSSTIR). The stretch at 403 to 423 (IKTFSEVLAEEEHRQQEAERQ) forms a coiled coil. 2 stretches are compositionally biased toward basic and acidic residues: residues 412 to 433 (EEEH…TCIK) and 455 to 468 (QSEE…SMQE). Low complexity-rich tracts occupy residues 486 to 498 (QQSS…SPSQ) and 730 to 749 (PPTQ…PSSS). Residues 750-763 (QMSMKTRRLSSAST) are compositionally biased toward polar residues. Over residues 789 to 805 (EIDLDPGKDEDDLPLEL) the composition is skewed to acidic residues.

Functionally, may play a role in mRNA transport. This chain is Zinc finger CCCH domain-containing protein 11B, found in Homo sapiens (Human).